The following is an 801-amino-acid chain: Probable inorganic carbon transporter subunit DabA (801 aa).

Positions 330, 332, 489, and 504 each coordinate Zn(2+).

The protein belongs to the inorganic carbon transporter (TC 9.A.2) DabA family. Forms a complex with DabB. Requires Zn(2+) as cofactor.

The protein resides in the cell inner membrane. Part of an energy-coupled inorganic carbon pump. The protein is Probable inorganic carbon transporter subunit DabA of Jannaschia sp. (strain CCS1).